A 248-amino-acid chain; its full sequence is tRNA pseudouridine synthase A (248 aa).

Residue Asp55 is the Nucleophile of the active site. Residue Tyr114 coordinates substrate.

It belongs to the tRNA pseudouridine synthase TruA family. In terms of assembly, homodimer.

It carries out the reaction uridine(38/39/40) in tRNA = pseudouridine(38/39/40) in tRNA. Formation of pseudouridine at positions 38, 39 and 40 in the anticodon stem and loop of transfer RNAs. In Rhodopseudomonas palustris (strain ATCC BAA-98 / CGA009), this protein is tRNA pseudouridine synthase A.